Here is a 762-residue protein sequence, read N- to C-terminus: Polyribonucleotide nucleotidyltransferase (762 aa).

Mg(2+)-binding residues include Asp-531 and Asp-537. Residues 597–656 (PRVTTIKVPVDKIGEVIGPKGKVINSITEETRAQISIEDDGTVFVGATDGPSAQAAIDKI) form the KH domain. One can recognise an S1 motif domain in the interval 668 to 737 (GERFLGTVVK…KRGKISLVLV (70 aa)).

The protein belongs to the polyribonucleotide nucleotidyltransferase family. It depends on Mg(2+) as a cofactor.

Its subcellular location is the cytoplasm. The catalysed reaction is RNA(n+1) + phosphate = RNA(n) + a ribonucleoside 5'-diphosphate. Its function is as follows. Involved in mRNA degradation. Catalyzes the phosphorolysis of single-stranded polyribonucleotides processively in the 3'- to 5'-direction. This Mycobacterium ulcerans (strain Agy99) protein is Polyribonucleotide nucleotidyltransferase.